Here is a 620-residue protein sequence, read N- to C-terminus: Membralin (620 aa).

A disordered region spans residues 1–33; that stretch reads MSEHVEPAAPGPGPNGGGGGPAPARGPRTPNLN. The residue at position 2 (S2) is an N-acetylserine. Residues 22–31 show a composition bias toward low complexity; it reads APARGPRTPN. Position 29 is a phosphothreonine (T29). Residues 70-90 traverse the membrane as a helical segment; the sequence is FFVLLKALFVLFVLAYIHIVF. Residue N189 is glycosylated (N-linked (GlcNAc...) asparagine). The next 3 helical transmembrane spans lie at 302–322, 346–366, and 426–446; these read TSYL…SMLL, IAFP…MEAI, and YSSL…IYFF. Disordered stretches follow at residues 474–517 and 568–620; these read TPTA…GPVA and SPLG…EVGS. Composition is skewed to low complexity over residues 499–517 and 568–593; these read PPAL…GPVA and SPLG…AASD.

This sequence belongs to the membralin family. As to quaternary structure, interacts with ERLIN2.

It is found in the endoplasmic reticulum membrane. In terms of biological role, may have a role in the ERAD pathway required for clearance of misfolded proteins in the endoplasmic reticulum (ER). Promotes survival of motor neurons, probably by protecting against ER stress. The polypeptide is Membralin (TMEM259) (Homo sapiens (Human)).